A 133-amino-acid chain; its full sequence is Holo-[acyl-carrier-protein] synthase (133 aa).

Asp8 and Glu56 together coordinate Mg(2+).

This sequence belongs to the P-Pant transferase superfamily. AcpS family. Requires Mg(2+) as cofactor.

It localises to the cytoplasm. The catalysed reaction is apo-[ACP] + CoA = holo-[ACP] + adenosine 3',5'-bisphosphate + H(+). Functionally, transfers the 4'-phosphopantetheine moiety from coenzyme A to a Ser of acyl-carrier-protein. The polypeptide is Holo-[acyl-carrier-protein] synthase (Clostridium perfringens (strain SM101 / Type A)).